A 190-amino-acid polypeptide reads, in one-letter code: Putative manganese efflux pump MntP (190 aa).

The next 6 membrane-spanning stretches (helical) occupy residues 3–23, 37–57, 72–88, 111–131, 138–158, and 164–184; these read FLQISLLSIGVAADAFACSVV, LVLAGIFGVFQAAMPLIGWFI, HWIAFALLGIVGTKMIW, IILGLATSIDALAVGMGLAFV, VALSMGSITFALSLAGAWIGH, and FGKWATILGGIILIGIGANIV.

Belongs to the MntP (TC 9.B.29) family.

The protein localises to the cell membrane. Probably functions as a manganese efflux pump. This is Putative manganese efflux pump MntP from Corynebacterium glutamicum (strain ATCC 13032 / DSM 20300 / JCM 1318 / BCRC 11384 / CCUG 27702 / LMG 3730 / NBRC 12168 / NCIMB 10025 / NRRL B-2784 / 534).